The primary structure comprises 449 residues: Chromosomal replication initiator protein DnaA (449 aa).

Residues 1–75 (MDTNNDIEKR…EILSQNKVGM (75 aa)) are domain I, interacts with DnaA modulators. The tract at residues 75-106 (MHLAHSVDVRIEVASKVHVSDHSNINYKATKS) is domain II. Residues 107–321 (SIKDSYTFEN…GAIIKISVNA (215 aa)) are domain III, AAA+ region. G151, G153, K154, and T155 together coordinate ATP. The segment at 322–449 (NLMNAPIDLN…LNELNDKKQH (128 aa)) is domain IV, binds dsDNA.

This sequence belongs to the DnaA family. As to quaternary structure, oligomerizes as a right-handed, spiral filament on DNA at oriC.

It localises to the cytoplasm. Its function is as follows. Plays an essential role in the initiation and regulation of chromosomal replication. ATP-DnaA binds to the origin of replication (oriC) to initiate formation of the DNA replication initiation complex once per cell cycle. Binds the DnaA box (a 9 base pair repeat at the origin) and separates the double-stranded (ds)DNA. Forms a right-handed helical filament on oriC DNA; dsDNA binds to the exterior of the filament while single-stranded (ss)DNA is stabiized in the filament's interior. The ATP-DnaA-oriC complex binds and stabilizes one strand of the AT-rich DNA unwinding element (DUE), permitting loading of DNA polymerase. After initiation quickly degrades to an ADP-DnaA complex that is not apt for DNA replication. Binds acidic phospholipids. This is Chromosomal replication initiator protein DnaA from Helicobacter acinonychis (strain Sheeba).